The chain runs to 244 residues: Lectin (244 aa).

A disordered region spans residues 1 to 20 (TETETTSFSIPKTDQPSSPK).

Belongs to the leguminous lectin family. In terms of assembly, homodimer. In contrast to other Lathyrus lectins which are tetramer of two alpha and two beta chains.

In Lathyrus sphaericus (Spring vetchling), this protein is Lectin.